We begin with the raw amino-acid sequence, 299 residues long: Small ribosomal subunit protein uS2 (299 aa).

The segment covering 259–291 (AAASAAGPTSWEADGADWAASSAPAAAGESWAE) has biased composition (low complexity). A disordered region spans residues 259-299 (AAASAAGPTSWEADGADWAASSAPAAAGESWAETQPAEGKW).

The protein belongs to the universal ribosomal protein uS2 family. In terms of assembly, component of the small ribosomal subunit. Mature ribosomes consist of a small (40S) and a large (60S) subunit. The 40S subunit contains about 33 different proteins and 1 molecule of RNA (18S). The 60S subunit contains about 49 different proteins and 3 molecules of RNA (25S, 5.8S and 5S). Interacts with rps21.

The protein resides in the cytoplasm. Its function is as follows. Required for the assembly and/or stability of the 40S ribosomal subunit. Required for the processing of the 20S rRNA-precursor to mature 18S rRNA in a late step of the maturation of 40S ribosomal subunits. The polypeptide is Small ribosomal subunit protein uS2 (rps0) (Aspergillus flavus (strain ATCC 200026 / FGSC A1120 / IAM 13836 / NRRL 3357 / JCM 12722 / SRRC 167)).